The sequence spans 425 residues: Trigger factor (425 aa).

A PPIase FKBP-type domain is found at 158–231 (GDLVRVNMEV…VEEVYKRTLP (74 aa)).

It belongs to the FKBP-type PPIase family. Tig subfamily.

It is found in the cytoplasm. The catalysed reaction is [protein]-peptidylproline (omega=180) = [protein]-peptidylproline (omega=0). Functionally, involved in protein export. Acts as a chaperone by maintaining the newly synthesized protein in an open conformation. Functions as a peptidyl-prolyl cis-trans isomerase. The chain is Trigger factor from Thermotoga petrophila (strain ATCC BAA-488 / DSM 13995 / JCM 10881 / RKU-1).